The chain runs to 336 residues: Galactose/methyl galactoside import permease protein MglC (336 aa).

Transmembrane regions (helical) follow at residues G17–L37, I53–G73, L107–I127, A128–I148, F181–W201, V227–L247, T257–V277, F279–I299, and I306–A326.

It belongs to the binding-protein-dependent transport system permease family. AraH/RbsC subfamily. The complex is composed of one ATP-binding protein (MglA), two transmembrane proteins (MglC) and a solute-binding protein (MglB).

It localises to the cell inner membrane. Part of the ABC transporter complex MglABC involved in galactose/methyl galactoside import. Probably responsible for the translocation of the substrate across the membrane. This chain is Galactose/methyl galactoside import permease protein MglC (mglC), found in Salmonella typhimurium (strain LT2 / SGSC1412 / ATCC 700720).